A 67-amino-acid chain; its full sequence is Small ribosomal subunit protein eS31 (67 aa).

C35, C38, C54, and C57 together coordinate Zn(2+). Residues 35-57 (CPRCGSIMAHHMKPLERWACGKC) form a C4-type zinc finger.

This sequence belongs to the eukaryotic ribosomal protein eS31 family. As to quaternary structure, part of the 30S ribosomal subunit. It depends on Zn(2+) as a cofactor.

In Sulfolobus acidocaldarius (strain ATCC 33909 / DSM 639 / JCM 8929 / NBRC 15157 / NCIMB 11770), this protein is Small ribosomal subunit protein eS31.